The chain runs to 1295 residues: Serine protease pet autotransporter (1295 aa).

The first 52 residues, 1 to 52 (MNKIYSIKYSAATGGLIAVSELAKKVICKTNRKISAALLSLAVISYTNIIYA), serve as a signal peptide directing secretion. A Peptidase S6 domain is found at 54 to 304 (NMDISKAWAR…TPFDSKTTNE (251 aa)). Residues H124, D153, and S260 each act as charge relay system in the active site. In terms of domain architecture, Autotransporter spans 1029–1295 (DINGEAGAWA…AINANFRYSF (267 aa)).

In terms of processing, cleaved to release the mature protein from the outer membrane.

It is found in the periplasm. Its subcellular location is the secreted. The protein resides in the cell surface. The protein localises to the cell outer membrane. Inhibition of cytotoxic activity by phenylmethylsulfonyl fluoride. Functionally, serine protease with enterotoxic and cytotoxic activity. Internalization into the host cell is required for the induction of cytopathic effects. However, the serine activity is not necessary for secretion and internalization into the host cell. The protein is Serine protease pet autotransporter (pet) of Escherichia coli O44:H18 (strain 042 / EAEC).